A 2512-amino-acid polypeptide reads, in one-letter code: Probable polyketide synthase 5 (2512 aa).

One can recognise a Ketosynthase family 3 (KS3) domain in the interval 17–447 (MKGVAIVGIG…GSNCCLLISE (431 aa)). Active-site for beta-ketoacyl synthase activity residues include cysteine 187, histidine 329, and histidine 368. Residues 638-671 (GVNPSFILGHSLGEIPTSYCSGMIDLDTFCYTVY) are acyl/malonyl transferase. Serine 648 functions as the For acyl/malonyl transferase activity in the catalytic mechanism. The tract at residues 928-1050 (IDHLGLSNSY…ANFQLLDHTI (123 aa)) is N-terminal hotdog fold. The region spanning 928–1210 (IDHLGLSNSY…SKSLIPIKEL (283 aa)) is the PKS/mFAS DH domain. Residue histidine 962 is the Proton acceptor; for dehydratase activity of the active site. The interval 1067-1210 (TLARLTKNEI…SKSLIPIKEL (144 aa)) is C-terminal hotdog fold. Aspartate 1125 (proton donor; for dehydratase activity) is an active-site residue. The region spanning 2430 to 2507 (AGSKNVDELF…VSIKIILNFL (78 aa)) is the Carrier domain. Serine 2467 carries the post-translational modification O-(pantetheine 4'-phosphoryl)serine.

Pantetheine 4'-phosphate serves as cofactor.

Its function is as follows. Probable polyketide synthase. This is Probable polyketide synthase 5 (pks5) from Dictyostelium discoideum (Social amoeba).